We begin with the raw amino-acid sequence, 142 residues long: Large ribosomal subunit protein uL13 (142 aa).

Belongs to the universal ribosomal protein uL13 family. In terms of assembly, part of the 50S ribosomal subunit.

Its function is as follows. This protein is one of the early assembly proteins of the 50S ribosomal subunit, although it is not seen to bind rRNA by itself. It is important during the early stages of 50S assembly. The chain is Large ribosomal subunit protein uL13 from Ralstonia pickettii (strain 12J).